The primary structure comprises 132 residues: Small ribosomal subunit protein uS8 (132 aa).

This sequence belongs to the universal ribosomal protein uS8 family. In terms of assembly, part of the 30S ribosomal subunit. Contacts proteins S5 and S12.

Functionally, one of the primary rRNA binding proteins, it binds directly to 16S rRNA central domain where it helps coordinate assembly of the platform of the 30S subunit. The protein is Small ribosomal subunit protein uS8 of Rickettsia bellii (strain OSU 85-389).